Consider the following 118-residue polypeptide: uncharacterized protein (118 aa).

The tract at residues 98–118 is disordered; sequence KGKGNEGREEAEEPLEEPEEG. Acidic residues predominate over residues 106–118; the sequence is EEAEEPLEEPEEG.

The protein belongs to the UPF0440 family.

This is an uncharacterized protein from Pyrococcus abyssi (strain GE5 / Orsay).